We begin with the raw amino-acid sequence, 203 residues long: dTTP/UTP pyrophosphatase (203 aa).

Residue aspartate 70 is the Proton acceptor of the active site.

Belongs to the Maf family. YhdE subfamily. A divalent metal cation serves as cofactor.

The protein resides in the cytoplasm. It carries out the reaction dTTP + H2O = dTMP + diphosphate + H(+). It catalyses the reaction UTP + H2O = UMP + diphosphate + H(+). In terms of biological role, nucleoside triphosphate pyrophosphatase that hydrolyzes dTTP and UTP. May have a dual role in cell division arrest and in preventing the incorporation of modified nucleotides into cellular nucleic acids. In Pseudomonas putida (strain ATCC 47054 / DSM 6125 / CFBP 8728 / NCIMB 11950 / KT2440), this protein is dTTP/UTP pyrophosphatase (maf-1).